The primary structure comprises 810 residues: Exocyst complex component 6B (810 aa).

The stretch at 79 to 118 (TELLKVRGEAQKLKNQVTDTNRKLQHEGKELVIAMEELKQ) forms a coiled coil. The segment at 258–282 (ESTSPKSEQDSGILDVEDEEDDEEV) is disordered. Positions 272–282 (DVEDEEDDEEV) are enriched in acidic residues.

Belongs to the SEC15 family. As to quaternary structure, the exocyst complex is composed of SEC3, SEC5, SEC6, SEC8, SEC10, SEC15, EXO70 and EXO84.

Functionally, component of the exocyst complex involved in the docking of exocytic vesicles with fusion sites on the plasma membrane. This Mus musculus (Mouse) protein is Exocyst complex component 6B (Exoc6b).